Here is a 513-residue protein sequence, read N- to C-terminus: Probable WRKY transcription factor 3 (513 aa).

Over residues 1–11 the composition is skewed to basic and acidic residues; that stretch reads MAEKEEKEPSK. Disordered stretches follow at residues 1–26, 175–281, and 297–394; these read MAEK…ISLP, NVHM…PACP, and IIYK…VASS. The segment covering 179 to 201 has biased composition (low complexity); it reads QQSQQSEYPSSTQQQQQQQQQAS. The span at 202–228 shows a compositional bias: polar residues; that stretch reads LTEIPSFSSAPRSQIRASVQETSQGQR. Basic and acidic residues predominate over residues 229–240; that stretch reads ETSEISVFEHRS. The segment at residues 244 to 308 is a DNA-binding region (WRKY 1); it reads NADKPADDGY…YKGQHNHELP (65 aa). Composition is skewed to polar residues over residues 311 to 335 and 343 to 355; these read RGNN…SSLN and TSQV…MSEA. Residues 368 to 387 show a composition bias toward basic and acidic residues; the sequence is VGERHEDEPDPKRRNTEVRV. The WRKY 2 DNA-binding region spans 409 to 474; that stretch reads SEVDLLDDGY…YEGKHNHDVP (66 aa).

As to expression, in young, mature and senescent leaves.

It is found in the nucleus. Its function is as follows. Transcription factor. Interacts specifically with the W box (5'-(T)TGAC[CT]-3'), a frequently occurring elicitor-responsive cis-acting element. The chain is Probable WRKY transcription factor 3 (WRKY3) from Arabidopsis thaliana (Mouse-ear cress).